The sequence spans 367 residues: Phosphoribosylaminoimidazole-succinocarboxamide synthase (367 aa).

Belongs to the SAICAR synthetase family.

The catalysed reaction is 5-amino-1-(5-phospho-D-ribosyl)imidazole-4-carboxylate + L-aspartate + ATP = (2S)-2-[5-amino-1-(5-phospho-beta-D-ribosyl)imidazole-4-carboxamido]succinate + ADP + phosphate + 2 H(+). It participates in purine metabolism; IMP biosynthesis via de novo pathway; 5-amino-1-(5-phospho-D-ribosyl)imidazole-4-carboxamide from 5-amino-1-(5-phospho-D-ribosyl)imidazole-4-carboxylate: step 1/2. The sequence is that of Phosphoribosylaminoimidazole-succinocarboxamide synthase from Vibrio campbellii (strain ATCC BAA-1116).